The chain runs to 305 residues: Deoxyribonuclease gamma (305 aa).

The signal sequence occupies residues 1 to 20 (MSRELAPLLLLLLSIHSALA). Positions 35–51 (KQEDKNAMDVIVKVIKR) match the Bipartite nuclear localization signal motif. Residues glutamate 100 and histidine 155 contribute to the active site. Cysteine 194 and cysteine 231 are disulfide-bonded. The not required for free DNA-nuclease activity but required for activity towards liposome-coated DNA stretch occupies residues 284–305 (SRAFTNSKKSVTLRKKTKSKRS). The short motif at 296-304 (LRKKTKSKR) is the Nuclear localization signal element.

This sequence belongs to the DNase I family. It depends on Ca(2+) as a cofactor. Requires Mg(2+) as cofactor. Poly-ADP-ribosylated by PARP1. ADP-ribosylation negatively regulates enzymatic activity during apoptosis. As to expression, liver and spleen.

The protein localises to the nucleus. Its subcellular location is the endoplasmic reticulum. It is found in the secreted. With respect to regulation, inhibited by zinc. Functionally, has DNA hydrolytic activity. Is capable of both single- and double-stranded DNA cleavage, producing DNA fragments with 3'-OH ends. Can cleave chromatin to nucleosomal units and cleaves nucleosomal and liposome-coated DNA. Acts in internucleosomal DNA fragmentation (INDF) during apoptosis and necrosis. The role in apoptosis includes myogenic and neuronal differentiation, and BCR-mediated clonal deletion of self-reactive B cells. Is active on chromatin in apoptotic cell-derived membrane-coated microparticles and thus suppresses anti-DNA autoimmunity. Together with DNASE1, plays a key role in degrading neutrophil extracellular traps (NETs). NETs are mainly composed of DNA fibers and are released by neutrophils to bind pathogens during inflammation. Degradation of intravascular NETs by DNASE1 and DNASE1L3 is required to prevent formation of clots that obstruct blood vessels and cause organ damage following inflammation. The polypeptide is Deoxyribonuclease gamma (Homo sapiens (Human)).